The chain runs to 365 residues: Peptide chain release factor 2 (365 aa).

Q252 carries the post-translational modification N5-methylglutamine.

The protein belongs to the prokaryotic/mitochondrial release factor family. Methylated by PrmC. Methylation increases the termination efficiency of RF2.

It is found in the cytoplasm. In terms of biological role, peptide chain release factor 2 directs the termination of translation in response to the peptide chain termination codons UGA and UAA. This chain is Peptide chain release factor 2 (prfB), found in Haemophilus influenzae (strain ATCC 51907 / DSM 11121 / KW20 / Rd).